Consider the following 271-residue polypeptide: Magnetosome protein MamX (271 aa).

At 1–10 the chain is on the cytoplasmic side; sequence MSSKAVAHPN. A helical transmembrane segment spans residues 11–31; sequence IAVWIMALGIAFSMALVLTAV. At 32 to 271 the chain is on the lumenal side; that stretch reads FNANPWEDHT…NAGGMDAEER (240 aa). An MCR (magnetochrome) 1 motif is present at residues 48–71; the sequence is IVAGMPAPHRDGREKMVCSSCHIV. Residues Cys-65, Cys-68, His-69, Cys-104, Cys-107, and His-108 each coordinate heme. The short motif at 87–110 is the MCR 2 element; sequence IVQGTPAPHVDGREKMPCASCHTI.

Belongs to the magnetosome MamX family. Heme serves as cofactor.

Its subcellular location is the magnetosome membrane. Required for correct biomineralization of the magnetosome, may be involved in redox control of biomineralization. May function with MamY, MamZ amd Mms6. The polypeptide is Magnetosome protein MamX (mamX) (Paramagnetospirillum magneticum (strain ATCC 700264 / AMB-1) (Magnetospirillum magneticum)).